Here is a 142-residue protein sequence, read N- to C-terminus: DNA-directed RNA polymerase II subunit RPB4 (142 aa).

The protein belongs to the eukaryotic RPB4 RNA polymerase subunit family. Component of the RNA polymerase II (Pol II) core complex consisting of 12 subunits: a ten-subunit catalytic core composed of POLR2A/RPB1, POLR2B/RPB2, POLR2C/RPB3, POLR2I/RPB9, POLR2J/RPB11, POLR2E/RPABC1, POLR2F/RPABC2, POLR2H/RPABC3, POLR2K/RPABC4 and POLR2L/RPABC5 and a mobile stalk composed of two subunits POLR2D/RPB4 and POLR2G/RPB7, protruding from the core and functioning primarily in transcription initiation. Part of Pol II(G) complex, in which Pol II core associates with an additional subunit POLR2M; unlike conventional Pol II, Pol II(G) functions as a transcriptional repressor. Part of Pol II pre-initiation complex (PIC), in which Pol II core assembles with Mediator, general transcription factors and other specific initiation factors including GTF2E1, GTF2E2, GTF2F1, GTF2F2, TCEA1, ERCC2, ERCC3, GTF2H2, GTF2H3, GTF2H4, GTF2H5, GTF2A1, GTF2A2, GTF2B and TBP; this large multi-subunit PIC complex mediates DNA unwinding and targets Pol II core to the transcription start site where the first phosphodiester bond forms.

It localises to the nucleus. Core component of RNA polymerase II (Pol II), a DNA-dependent RNA polymerase which synthesizes mRNA precursors and many functional non-coding RNAs using the four ribonucleoside triphosphates as substrates. Pol II is the central component of the basal RNA polymerase II transcription machinery. It is composed of mobile elements that move relative to each other. POLR2D/RPB4 is part of a subcomplex with POLR2G/RPB7 that binds to a pocket formed by POLR2A/RPB1, POLR2B/RPB2 and POLR2F/RPABC2 at the base of the clamp element. The POLR2D/RPB4-POLR2G/RPB7 subcomplex seems to lock the clamp via POLR2G/RPB7 in the closed conformation thus preventing double-stranded DNA to enter the active site cleft. The POLR2D/RPB4-POLR2G/RPB7 subcomplex binds single-stranded DNA and RNA. The chain is DNA-directed RNA polymerase II subunit RPB4 (POLR2D) from Bos taurus (Bovine).